The following is a 68-amino-acid chain: MIYPSINELMKKVDSRYTLAVEAAKRARQLVDGATKMAKCDSDKEVTIAINEIAEDKITYVRTKSGIK.

Belongs to the RNA polymerase subunit omega family. The RNAP catalytic core consists of 2 alpha, 1 beta, 1 beta' and 1 omega subunit. When a sigma factor is associated with the core the holoenzyme is formed, which can initiate transcription.

The catalysed reaction is RNA(n) + a ribonucleoside 5'-triphosphate = RNA(n+1) + diphosphate. In terms of biological role, promotes RNA polymerase assembly. Latches the N- and C-terminal regions of the beta' subunit thereby facilitating its interaction with the beta and alpha subunits. The sequence is that of DNA-directed RNA polymerase subunit omega from Ruminiclostridium cellulolyticum (strain ATCC 35319 / DSM 5812 / JCM 6584 / H10) (Clostridium cellulolyticum).